Reading from the N-terminus, the 35-residue chain is Photosystem II reaction center protein T (35 aa).

The chain crosses the membrane as a helical span at residues Ala-3–Phe-23.

It belongs to the PsbT family. In terms of assembly, PSII is composed of 1 copy each of membrane proteins PsbA, PsbB, PsbC, PsbD, PsbE, PsbF, PsbH, PsbI, PsbJ, PsbK, PsbL, PsbM, PsbT, PsbY, PsbZ, Psb30/Ycf12, at least 3 peripheral proteins of the oxygen-evolving complex and a large number of cofactors. It forms dimeric complexes.

It localises to the plastid. It is found in the chloroplast thylakoid membrane. Functionally, found at the monomer-monomer interface of the photosystem II (PS II) dimer, plays a role in assembly and dimerization of PSII. PSII is a light-driven water plastoquinone oxidoreductase, using light energy to abstract electrons from H(2)O, generating a proton gradient subsequently used for ATP formation. The chain is Photosystem II reaction center protein T from Staurastrum punctulatum (Green alga).